A 147-amino-acid polypeptide reads, in one-letter code: Transcription antitermination protein NusB (147 aa).

Belongs to the NusB family.

Involved in transcription antitermination. Required for transcription of ribosomal RNA (rRNA) genes. Binds specifically to the boxA antiterminator sequence of the ribosomal RNA (rrn) operons. The sequence is that of Transcription antitermination protein NusB from Legionella pneumophila (strain Paris).